Reading from the N-terminus, the 805-residue chain is Leucine--tRNA ligase (805 aa).

The short motif at 40-51 (PYPSGSGLHVGH) is the 'HIGH' region element. The 'KMSKS' region signature appears at 576-580 (KMSKS). Lysine 579 lines the ATP pocket.

It belongs to the class-I aminoacyl-tRNA synthetase family.

The protein resides in the cytoplasm. It catalyses the reaction tRNA(Leu) + L-leucine + ATP = L-leucyl-tRNA(Leu) + AMP + diphosphate. In Chlorobium chlorochromatii (strain CaD3), this protein is Leucine--tRNA ligase.